The following is a 386-amino-acid chain: Latent membrane protein 1 (386 aa).

At 2-23 the chain is on the cytoplasmic side; it reads DLDLERGPPGPRRPPRGPPLSS. Residues 24-44 traverse the membrane as a helical segment; that stretch reads SIGLALLLLLLALLFWLYIIM. The Extracellular segment spans residues 45–51; it reads SNWTGGA. Residues 52–72 form a helical membrane-spanning segment; sequence LLVLYAFALMLVIIILIIFIF. The Cytoplasmic portion of the chain corresponds to 73 to 75; that stretch reads RRD. The helical transmembrane segment at 76 to 96 threads the bilayer; it reads LLCPLGALCLLLLMITLLLIA. Residues 97-106 lie on the Extracellular side of the membrane; sequence LWNLHGQALY. Residues 107–127 traverse the membrane as a helical segment; that stretch reads LGIVLFIFGCLLVLGLWIYLL. Topologically, residues 128 to 139 are cytoplasmic; it reads EILWRLGATIWQ. A helical transmembrane segment spans residues 140–160; that stretch reads LLAFFLAFFLDIILLIIALYL. Residues 161–163 lie on the Extracellular side of the membrane; that stretch reads QQN. Residues 164–184 traverse the membrane as a helical segment; it reads WWTLLVDLLWLLLFLAILIWM. Over 185-386 the chain is Cytoplasmic; the sequence is YYHGQRHSDE…HGPVQLSYYD (202 aa). Residues 194 to 232 form a CTAR1 region; the sequence is EHHHDDSLPHPQQATDDSSNQSDSNSNEGRHLLLVSGAG. Residues 194 to 386 are disordered; that stretch reads EHHHDDSLPH…HGPVQLSYYD (193 aa). Composition is skewed to low complexity over residues 209-220 and 251-267; these read DDSSNQSDSNSN and NGPQDPDNTDDNGPQDP. Positions 342 to 386 are CTAR2; the sequence is GGGGHSHDSGHDGIDPHLPTLLLGTSGSGGDDDDPHGPVQLSYYD. Residues 346–356 show a composition bias toward basic and acidic residues; sequence HSHDSGHDGID. The span at 357-366 shows a compositional bias: low complexity; sequence PHLPTLLLGT.

It belongs to the herpesviridae LMP-1 family. In terms of assembly, interacts (via PXQXT motif) with host tumor necrosis factor receptor-associated factor (TRAF) proteins TRAF1, TRAF2, TRAF3 and TRAF5. Interacts with TRAF3; this interaction activates B lymphocytes. Interacts with human protein ZMYND11; leading to negatively regulate NF-kappa-B activation. Interacts with host UBE2I; this interaction induces the sumoylation of various cellular proteins. Interacts with host IRF7. Interacts with host TYK2. Post-translationally, ubiquitinated on the N-terminus.

The protein resides in the host cell membrane. Functionally, acts as a CD40 functional homolog to prevent apoptosis of infected B-lymphocytes and drive their proliferation. Functions as a constitutively active tumor necrosis factor receptor that induces the activation of several signaling pathways, including those of the NF-kappa-B family. LMP1 signaling leads to up-regulation of antiapoptotic proteins and provide growth signals in latently infected cells. Interacts with host UBE2I and subsequently affects the sumoylation state of several cellular proteins. For example, induces the sumoylation of host IRF7 thereby limiting its transcriptional activity and modulating the activation of innate immune responses. Also inhibits host IFN-alpha-stimulated STAT2 nuclear translocation and interferon-stimulated response element transcriptional activity by interacting with and inhibiting host TYK2. Induces SUMO expression during viral latency thereby dysregulating the host sumoylation processes. The chain is Latent membrane protein 1 (LMP1) from Homo sapiens (Human).